A 378-amino-acid polypeptide reads, in one-letter code: Secreted LysM effector ldpA (378 aa).

The N-terminal stretch at 1–19 (MMKSIRFLASALALCLVDA) is a signal peptide. Residues 118–131 (WTPPTTTTRSTSSS) show a composition bias toward low complexity. Residues 118-139 (WTPPTTTTRSTSSSAGNGVTTP) are disordered. The region spanning 152 to 198 (RFYLVVSGDSCYDIAAAQGISLDNFYTWNPAVGSSCGGLWPDYYVCV) is the LysM 1 domain. The segment at 208 to 230 (TTTTTTTPTTTSTTTTTAGNGVT) is disordered. LysM domains follow at residues 245 to 291 (KFYQ…YVCV) and 330 to 376 (KFYL…YVCV).

The protein belongs to the secreted LysM effector family.

It is found in the secreted. It localises to the cell wall. Its subcellular location is the extracellular space. The protein resides in the extracellular matrix. In terms of biological role, cell wall chitin of A.fumigatus recruits lung eosinophils during infection and ldpA might have a role in sequestration of chitin and act as triggers of host immunity to dampen host defense. The protein is Secreted LysM effector ldpA of Aspergillus fumigatus (strain ATCC MYA-4609 / CBS 101355 / FGSC A1100 / Af293) (Neosartorya fumigata).